The chain runs to 236 residues: GTP cyclohydrolase 1 (236 aa).

The interval 1-52 (MAAARSCNGYARREGPPSPKLGTEKPRVSAGSGGSGDGWRGERPRSEEDNEL) is disordered. Residues Cys-127, His-130, and Cys-198 each coordinate Zn(2+).

The protein belongs to the GTP cyclohydrolase I family. As to quaternary structure, toroid-shaped homodecamer, composed of two pentamers of five dimers.

It localises to the cytoplasm. The protein localises to the nucleus. It catalyses the reaction GTP + H2O = 7,8-dihydroneopterin 3'-triphosphate + formate + H(+). It functions in the pathway cofactor biosynthesis; 7,8-dihydroneopterin triphosphate biosynthesis; 7,8-dihydroneopterin triphosphate from GTP: step 1/1. GTP shows a positive allosteric effect, and tetrahydrobiopterin inhibits the enzyme activity. Zinc is required for catalytic activity. Inhibited by Mg(2+). May positively regulate nitric oxide synthesis in endothelial cells. May be involved in dopamine synthesis. May modify pain sensitivity and persistence. This is GTP cyclohydrolase 1 (GCH1) from Gallus gallus (Chicken).